Here is a 409-residue protein sequence, read N- to C-terminus: DNA primase small subunit (409 aa).

Residues E46, D111, and D113 contribute to the active site. Positions 123–133 (CCSGAQVCSKC) match the Zinc knuckle motif motif.

The protein belongs to the eukaryotic-type primase small subunit family. In terms of assembly, DNA polymerase alpha:primase is a four subunit enzyme complex, which is assembled throughout the cell cycle, and consists of the two DNA polymerase subunits A POL1 and B POL12, and the DNA primase large PRI2 and small PRI1 subunits.

DNA primase is the polymerase that synthesizes small RNA primers for the Okazaki fragments made during discontinuous DNA replication. In a complex with DNA polymerase alpha (DNA polymerase alpha:primase) constitutes a replicative polymerase. Both primase components participate in formation of the active center, but the ATP-binding site is exclusively located on p48. The polypeptide is DNA primase small subunit (PRI1) (Saccharomyces cerevisiae (strain ATCC 204508 / S288c) (Baker's yeast)).